Here is a 154-residue protein sequence, read N- to C-terminus: 6,7-dimethyl-8-ribityllumazine synthase (154 aa).

5-amino-6-(D-ribitylamino)uracil is bound by residues Phe-23, 57–59, and 81–83; these read AFE and AVI. Position 86 to 87 (86 to 87) interacts with (2S)-2-hydroxy-3-oxobutyl phosphate; that stretch reads AT. The Proton donor role is filled by His-89. 5-amino-6-(D-ribitylamino)uracil is bound at residue Phe-114. Arg-128 is a (2S)-2-hydroxy-3-oxobutyl phosphate binding site.

It belongs to the DMRL synthase family.

It carries out the reaction (2S)-2-hydroxy-3-oxobutyl phosphate + 5-amino-6-(D-ribitylamino)uracil = 6,7-dimethyl-8-(1-D-ribityl)lumazine + phosphate + 2 H2O + H(+). Its pathway is cofactor biosynthesis; riboflavin biosynthesis; riboflavin from 2-hydroxy-3-oxobutyl phosphate and 5-amino-6-(D-ribitylamino)uracil: step 1/2. In terms of biological role, catalyzes the formation of 6,7-dimethyl-8-ribityllumazine by condensation of 5-amino-6-(D-ribitylamino)uracil with 3,4-dihydroxy-2-butanone 4-phosphate. This is the penultimate step in the biosynthesis of riboflavin. The polypeptide is 6,7-dimethyl-8-ribityllumazine synthase (Nautilia profundicola (strain ATCC BAA-1463 / DSM 18972 / AmH)).